The sequence spans 759 residues: LON peptidase N-terminal domain and RING finger protein 3 (759 aa).

The tract at residues M1–V69 is disordered. Polar residues predominate over residues E57–E66. A TPR 1 repeat occupies S67–V100. An RING-type 1 zinc finger spans residues C158–G196. 3 TPR repeats span residues A243–D276, L278–G310, and K312–N344. The disordered stretch occupies residues H360–S454. The segment covering A380–D393 has biased composition (basic and acidic residues). Residues C467–K505 form an RING-type 2 zinc finger. The Lon N-terminal domain occupies M546–S755.

This is LON peptidase N-terminal domain and RING finger protein 3 (LONRF3) from Homo sapiens (Human).